The chain runs to 811 residues: MVIESEINDKKRGLESSSPTINDPKKVKVESPSSGKEDGEVDEVTSSPASRETSSSKLMSPSKNQSSSSSRSYHDSNNGYRRKDERYSSSRSYDRNYRDRDISRDGDRERDRDRERDRDRDRDRDRDRDRDRDRERDRDRDRDRDRDRDRDRDRDRERERERDRDRNSQERGSRNSHERDYRDNRDYSRDSRDNMDSRDNKNGSRQSINNNTLSYEKQADRKDEVRVKDNISVNDDKTNHGENLTNESITATSTNEPTKPAVIIEEDEETKTKRILEENRLQRQLIMEKYNKEQPQPITSSLSTTEKEQSNTNTNSNSTPVATTTTSILAKSPSNLENQIEEEDESIIIEWRKDQNSENSSAFNDNNNDESCSSEEDLKKRGKIKEEDIKAKDKPITTTTTTTTINNVSIKLPPKPEPIKAKTSAPVFDMFSDSPSDETDESNRDLNETNGGGVMVDANIVVNPSINLSDNWDDADGYYKFRVGEIMDKYQIFSPIGSGVFSTVVSAKETKTNEDVVIKIIRNRPSMHRSGLKEIEILQKISNTPTSSNQKSHCIQMKDHFNYRNHLCIVFEPMSMSLHQLIKKYGKDIGLSLNAVRVYAKQLFLALKHIKNSKILHADIKPDNIVVNEAKNTIKIVDFGSAGEIHESEITPYLVSRFYRAPEIILGHKYDYSIDVWSVGCCLAEFFTGKFLFPGKTNNDMIRLFMEYRGAFSKKMLKKSEFVSNHFNENLVFMKQEIDNIEKTVRKVPHDITKPTKDILQFLLPKNVSIPDQDMKKLIQLKDLIEKCTILDPEKRITPFEALNHEFLKPF.

Disordered regions lie at residues 1–257 (MVIE…TNEP), 288–341 (EKYN…NQIE), 353–379 (KDQN…EDLK), and 408–452 (VSIK…TNGG). The segment covering 46 to 71 (SSPASRETSSSKLMSPSKNQSSSSSR) has biased composition (low complexity). Over residues 81-202 (RRKDERYSSS…DNMDSRDNKN (122 aa)) the composition is skewed to basic and acidic residues. Residues 203-215 (GSRQSINNNTLSY) show a composition bias toward polar residues. The span at 217–240 (KQADRKDEVRVKDNISVNDDKTNH) shows a compositional bias: basic and acidic residues. Composition is skewed to polar residues over residues 241–257 (GENL…TNEP) and 293–302 (EQPQPITSSL). The segment covering 310–327 (SNTNTNSNSTPVATTTTS) has biased composition (low complexity). The region spanning 490 to 808 (YQIFSPIGSG…PFEALNHEFL (319 aa)) is the Protein kinase domain. Residues 496–504 (IGSGVFSTV) and Lys519 contribute to the ATP site. Asp619 (proton acceptor) is an active-site residue.

Belongs to the protein kinase superfamily. CMGC Ser/Thr protein kinase family. Phosphorylated. Autophosphorylated; phosphorylation inhibits interaction with its targets.

The protein localises to the nucleus. It localises to the chromosome. The protein resides in the centromere. Its subcellular location is the kinetochore. It carries out the reaction L-seryl-[protein] + ATP = O-phospho-L-seryl-[protein] + ADP + H(+). The catalysed reaction is L-threonyl-[protein] + ATP = O-phospho-L-threonyl-[protein] + ADP + H(+). Serine/threonine kinase involved in spliceosomal assembly as well as mitosis and signaling regulation. In Dictyostelium discoideum (Social amoeba), this protein is Serine/threonine-protein kinase prpf4B (prp4k).